The sequence spans 293 residues: Proline iminopeptidase (293 aa).

One can recognise an AB hydrolase-1 domain in the interval 28 to 277; that stretch reads KPLVLLHGGP…YSRHMPFVEE (250 aa). The active-site Nucleophile is the serine 104. Aspartate 244 is a catalytic residue. The active-site Proton donor is histidine 271.

It belongs to the peptidase S33 family.

The enzyme catalyses Release of N-terminal proline from a peptide.. Functionally, releases the N-terminal proline from various substrates. This is Proline iminopeptidase from Clostridioides difficile (strain 630) (Peptoclostridium difficile).